We begin with the raw amino-acid sequence, 283 residues long: Thymidylate synthase (283 aa).

Arg21 serves as a coordination point for dUMP. His51 is a (6R)-5,10-methylene-5,6,7,8-tetrahydrofolate binding site. Residue 123-124 (RR) participates in dUMP binding. Cys156 acts as the Nucleophile in catalysis. Residues 185–188 (RSAD), Asn196, and 226–228 (HIY) each bind dUMP. Asp188 serves as a coordination point for (6R)-5,10-methylene-5,6,7,8-tetrahydrofolate. Ala282 serves as a coordination point for (6R)-5,10-methylene-5,6,7,8-tetrahydrofolate.

The protein belongs to the thymidylate synthase family. Bacterial-type ThyA subfamily. In terms of assembly, homodimer.

Its subcellular location is the cytoplasm. It carries out the reaction dUMP + (6R)-5,10-methylene-5,6,7,8-tetrahydrofolate = 7,8-dihydrofolate + dTMP. Its pathway is pyrimidine metabolism; dTTP biosynthesis. Functionally, catalyzes the reductive methylation of 2'-deoxyuridine-5'-monophosphate (dUMP) to 2'-deoxythymidine-5'-monophosphate (dTMP) while utilizing 5,10-methylenetetrahydrofolate (mTHF) as the methyl donor and reductant in the reaction, yielding dihydrofolate (DHF) as a by-product. This enzymatic reaction provides an intracellular de novo source of dTMP, an essential precursor for DNA biosynthesis. This is Thymidylate synthase from Flavobacterium johnsoniae (strain ATCC 17061 / DSM 2064 / JCM 8514 / BCRC 14874 / CCUG 350202 / NBRC 14942 / NCIMB 11054 / UW101) (Cytophaga johnsonae).